Here is a 219-residue protein sequence, read N- to C-terminus: Ribose-5-phosphate isomerase A (219 aa).

Substrate-binding positions include 28-31 (TGST), 81-84 (DGAD), and 94-97 (KGGG). Residue Glu-103 is the Proton acceptor of the active site. Lys-121 contacts substrate.

Belongs to the ribose 5-phosphate isomerase family. Homodimer.

It catalyses the reaction aldehydo-D-ribose 5-phosphate = D-ribulose 5-phosphate. It functions in the pathway carbohydrate degradation; pentose phosphate pathway; D-ribose 5-phosphate from D-ribulose 5-phosphate (non-oxidative stage): step 1/1. Catalyzes the reversible conversion of ribose-5-phosphate to ribulose 5-phosphate. The polypeptide is Ribose-5-phosphate isomerase A (Salmonella arizonae (strain ATCC BAA-731 / CDC346-86 / RSK2980)).